Consider the following 555-residue polypeptide: Lysine--tRNA ligase (555 aa).

Positions T37 to N45 match the 'HIGH' region motif. The 'KMSKS' region signature appears at A301–S305.

Belongs to the class-I aminoacyl-tRNA synthetase family.

Its subcellular location is the cytoplasm. The catalysed reaction is tRNA(Lys) + L-lysine + ATP = L-lysyl-tRNA(Lys) + AMP + diphosphate. In Methanopyrus kandleri (strain AV19 / DSM 6324 / JCM 9639 / NBRC 100938), this protein is Lysine--tRNA ligase.